Here is a 283-residue protein sequence, read N- to C-terminus: Protein/nucleic acid deglycase HchA (283 aa).

The Zn(2+) site is built by H86, E91, and H123. Residue C185 is the Nucleophile of the active site.

It belongs to the peptidase C56 family. HchA subfamily. As to quaternary structure, homodimer.

It is found in the cytoplasm. It carries out the reaction N(omega)-(1-hydroxy-2-oxopropyl)-L-arginyl-[protein] + H2O = lactate + L-arginyl-[protein] + H(+). It catalyses the reaction N(6)-(1-hydroxy-2-oxopropyl)-L-lysyl-[protein] + H2O = lactate + L-lysyl-[protein] + H(+). The enzyme catalyses S-(1-hydroxy-2-oxopropyl)-L-cysteinyl-[protein] + H2O = lactate + L-cysteinyl-[protein] + H(+). The catalysed reaction is N(omega)-(1-hydroxy-2-oxoethyl)-L-arginyl-[protein] + H2O = L-arginyl-[protein] + glycolate + H(+). It carries out the reaction N(6)-(1-hydroxy-2-oxoethyl)-L-lysyl-[protein] + H2O = glycolate + L-lysyl-[protein] + H(+). It catalyses the reaction S-(1-hydroxy-2-oxoethyl)-L-cysteinyl-[protein] + H2O = glycolate + L-cysteinyl-[protein] + H(+). The enzyme catalyses N(2)-(1-hydroxy-2-oxopropyl)-dGTP + H2O = lactate + dGTP + H(+). The catalysed reaction is N(2)-(1-hydroxy-2-oxopropyl)-GTP + H2O = lactate + GTP + H(+). It carries out the reaction N(2)-(1-hydroxy-2-oxopropyl)-GDP + H2O = lactate + GDP + H(+). It catalyses the reaction N(2)-(1-hydroxy-2-oxopropyl)-GMP + H2O = lactate + GMP + H(+). The enzyme catalyses N(2)-(1-hydroxy-2-oxoethyl)-dGTP + H2O = dGTP + glycolate + H(+). The catalysed reaction is N(2)-(1-hydroxy-2-oxoethyl)-GTP + H2O = glycolate + GTP + H(+). It carries out the reaction N(2)-(1-hydroxy-2-oxoethyl)-GDP + H2O = glycolate + GDP + H(+). It catalyses the reaction N(2)-(1-hydroxy-2-oxoethyl)-GMP + H2O = glycolate + GMP + H(+). The enzyme catalyses an N(2)-(1-hydroxy-2-oxopropyl)-guanosine in RNA + H2O = a guanosine in RNA + lactate + H(+). The catalysed reaction is an N(2)-(1-hydroxy-2-oxopropyl)-2'-deoxyguanosine in DNA + H2O = a 2'-deoxyguanosine in DNA + lactate + H(+). It carries out the reaction an N(2)-(1-hydroxy-2-oxoethyl)-guanosine in RNA + H2O = a guanosine in RNA + glycolate + H(+). It catalyses the reaction an N(2)-(1-hydroxy-2-oxoethyl)-2'-deoxyguanosine in DNA + H2O = a 2'-deoxyguanosine in DNA + glycolate + H(+). Functionally, protein and nucleotide deglycase that catalyzes the deglycation of the Maillard adducts formed between amino groups of proteins or nucleotides and reactive carbonyl groups of glyoxals. Thus, functions as a protein deglycase that repairs methylglyoxal- and glyoxal-glycated proteins, and releases repaired proteins and lactate or glycolate, respectively. Deglycates cysteine, arginine and lysine residues in proteins, and thus reactivates these proteins by reversing glycation by glyoxals. Acts on early glycation intermediates (hemithioacetals and aminocarbinols), preventing the formation of Schiff bases and advanced glycation endproducts (AGE). Also functions as a nucleotide deglycase able to repair glycated guanine in the free nucleotide pool (GTP, GDP, GMP, dGTP) and in DNA and RNA. Is thus involved in a major nucleotide repair system named guanine glycation repair (GG repair), dedicated to reversing methylglyoxal and glyoxal damage via nucleotide sanitization and direct nucleic acid repair. Plays an important role in protecting cells from carbonyl stress. This is Protein/nucleic acid deglycase HchA from Escherichia coli (strain 55989 / EAEC).